The following is a 335-amino-acid chain: Capsular polysaccharide phosphotransferase WcwK (335 aa).

Belongs to the stealth family.

The polypeptide is Capsular polysaccharide phosphotransferase WcwK (wcwK) (Streptococcus pneumoniae).